Here is a 246-residue protein sequence, read N- to C-terminus: Polyhedrin (246 aa).

This sequence belongs to the polyhedrin family.

In terms of biological role, major component of the virus occlusion bodies, which are large proteinaceous structures (polyhedra), that protect the virus from the outside environment for extended periods until they are ingested by insect larvae. The protein is Polyhedrin (PH) of Lepidoptera (butterflies and moths).